The primary structure comprises 311 residues: Putative pyruvate, phosphate dikinase regulatory protein (311 aa).

Residue 180-187 coordinates ADP; it reads GVSRSSKT.

The protein belongs to the pyruvate, phosphate/water dikinase regulatory protein family. PDRP subfamily.

It carries out the reaction N(tele)-phospho-L-histidyl/L-threonyl-[pyruvate, phosphate dikinase] + ADP = N(tele)-phospho-L-histidyl/O-phospho-L-threonyl-[pyruvate, phosphate dikinase] + AMP + H(+). The catalysed reaction is N(tele)-phospho-L-histidyl/O-phospho-L-threonyl-[pyruvate, phosphate dikinase] + phosphate + H(+) = N(tele)-phospho-L-histidyl/L-threonyl-[pyruvate, phosphate dikinase] + diphosphate. Functionally, bifunctional serine/threonine kinase and phosphorylase involved in the regulation of the pyruvate, phosphate dikinase (PPDK) by catalyzing its phosphorylation/dephosphorylation. The polypeptide is Putative pyruvate, phosphate dikinase regulatory protein (Paramagnetospirillum magneticum (strain ATCC 700264 / AMB-1) (Magnetospirillum magneticum)).